Here is a 382-residue protein sequence, read N- to C-terminus: Na(+)/H(+) antiporter NhaA 2 (382 aa).

The next 11 helical transmembrane spans lie at 7 to 27, 58 to 78, 94 to 114, 124 to 144, 153 to 173, 178 to 198, 199 to 219, 255 to 275, 291 to 311, 327 to 347, and 361 to 381; these read MVLSETFPGILLIFFTFLALL, LDLWINDGLIAIFFLCIGLEL, SLPIFGALGGMITPALIFAAI, GWAIPTATDIAFAVGILMLLG, LFLLSLAIFDDLGAIVIIALF, LSALAIIICLFCIFALLLLNY, YHITHLSLYVLVGVVLWIAML, NPWVVYFILPLFAFANAGIDI, IILGLFLGKQLGVFTFCFIAI, FYGICILTGIGFTMSLFIDGL, and LAILIASFLSAIVGFIYLKIV.

The protein belongs to the NhaA Na(+)/H(+) (TC 2.A.33) antiporter family.

The protein resides in the cell inner membrane. The catalysed reaction is Na(+)(in) + 2 H(+)(out) = Na(+)(out) + 2 H(+)(in). Its function is as follows. Na(+)/H(+) antiporter that extrudes sodium in exchange for external protons. The chain is Na(+)/H(+) antiporter NhaA 2 from Campylobacter jejuni subsp. jejuni serotype O:6 (strain 81116 / NCTC 11828).